The chain runs to 262 residues: G patch domain-containing protein 11 (262 aa).

3 stretches are compositionally biased toward basic and acidic residues: residues 39–61, 114–127, and 136–165; these read LHKEKDIQNRQKSFKEQEKESRE, EEVKKRKADEELQN, and QHLEKKSIEDFRVRKRTEREERQTQGDLRK. 2 disordered regions span residues 39–71 and 88–169; these read LHKEKDIQNRQKSFKEQEKESREAALQSSIGSQ and GLGK…SQRA. A coiled-coil region spans residues 41–62; it reads KEKDIQNRQKSFKEQEKESREA. The G-patch domain maps to 70-116; that stretch reads SQNKGFALLQKMGYKAGQGLGKEGAGRVEPVPLNIKTDRGGIGMEEV.

Belongs to the GPATCH11 family.

The protein resides in the chromosome. It localises to the centromere. The protein localises to the kinetochore. This Danio rerio (Zebrafish) protein is G patch domain-containing protein 11 (gpatch11).